The chain runs to 139 residues: Putative pre-16S rRNA nuclease (139 aa).

It belongs to the YqgF nuclease family.

It is found in the cytoplasm. Functionally, could be a nuclease involved in processing of the 5'-end of pre-16S rRNA. This Streptococcus thermophilus (strain ATCC BAA-491 / LMD-9) protein is Putative pre-16S rRNA nuclease.